The primary structure comprises 139 residues: Galactoside-binding soluble lectin 13 (139 aa).

In terms of domain architecture, Galectin spans 6-138; sequence VPYKLPVSLS…DISLTSVCVC (133 aa).

As to quaternary structure, homodimer; disulfide-linked. In terms of tissue distribution, detected in adult and fetal spleen, fetal kidney, adult urinary bladder and placenta. Placental expression originates predominantly from the syncytiotrophoblast.

It localises to the cytoplasm. The protein resides in the nucleus matrix. In terms of biological role, binds beta-galactoside and lactose. Strong inducer of T-cell apoptosis. Has hemagglutinating activity towards chicken erythrocytes. The protein is Galactoside-binding soluble lectin 13 (LGALS13) of Homo sapiens (Human).